The following is a 105-amino-acid chain: 3-phenylpropionate/cinnamic acid dioxygenase ferredoxin subunit (105 aa).

The region spanning 4 to 99 (LFVCTVEELP…VVVKDGNIYI (96 aa)) is the Rieske domain. Residues C42, H44, C62, and H65 each coordinate [2Fe-2S] cluster.

Belongs to the bacterial ring-hydroxylating dioxygenase ferredoxin component family. This dioxygenase system consists of four proteins: the two subunits of the hydroxylase component (HcaE and HcaF), a ferredoxin (HcaC) and a ferredoxin reductase (HcaD). The cofactor is [2Fe-2S] cluster.

It functions in the pathway aromatic compound metabolism; 3-phenylpropanoate degradation. In terms of biological role, part of the multicomponent 3-phenylpropionate dioxygenase, that converts 3-phenylpropionic acid (PP) and cinnamic acid (CI) into 3-phenylpropionate-dihydrodiol (PP-dihydrodiol) and cinnamic acid-dihydrodiol (CI-dihydrodiol), respectively. This protein seems to be a 2Fe-2S ferredoxin. This is 3-phenylpropionate/cinnamic acid dioxygenase ferredoxin subunit from Photorhabdus laumondii subsp. laumondii (strain DSM 15139 / CIP 105565 / TT01) (Photorhabdus luminescens subsp. laumondii).